Reading from the N-terminus, the 343-residue chain is Phenylalanine--tRNA ligase alpha subunit (343 aa).

Residue Glu268 participates in Mg(2+) binding.

The protein belongs to the class-II aminoacyl-tRNA synthetase family. Phe-tRNA synthetase alpha subunit type 1 subfamily. Tetramer of two alpha and two beta subunits. The cofactor is Mg(2+).

It is found in the cytoplasm. The enzyme catalyses tRNA(Phe) + L-phenylalanine + ATP = L-phenylalanyl-tRNA(Phe) + AMP + diphosphate + H(+). In Cupriavidus taiwanensis (strain DSM 17343 / BCRC 17206 / CCUG 44338 / CIP 107171 / LMG 19424 / R1) (Ralstonia taiwanensis (strain LMG 19424)), this protein is Phenylalanine--tRNA ligase alpha subunit.